The sequence spans 558 residues: Putative ABC transporter ATP-binding protein SMU_1934c (558 aa).

ABC transporter domains follow at residues 5-246 (IEFK…GIRE) and 295-527 (FDIQ…ANLK). ATP-binding positions include 39–46 (GPSGSGKS) and 328–335 (GKNGAGKS).

This sequence belongs to the ABC transporter superfamily.

The protein localises to the cell membrane. In terms of biological role, probably part of an ABC transporter complex. Responsible for energy coupling to the transport system. In Streptococcus mutans serotype c (strain ATCC 700610 / UA159), this protein is Putative ABC transporter ATP-binding protein SMU_1934c (sdcBA).